A 154-amino-acid polypeptide reads, in one-letter code: Putative ankyrin repeat protein RBE_1220 (154 aa).

ANK repeat units follow at residues 78-108 (EKVNILNVAAANNSVTVINYLLDNNIFNVDQ) and 113-142 (NSRTALHSAVKENAMESTKFLLKKEQILIL).

The sequence is that of Putative ankyrin repeat protein RBE_1220 from Rickettsia bellii (strain RML369-C).